A 261-amino-acid polypeptide reads, in one-letter code: Sulfur carrier protein FdhD (261 aa).

The active-site Cysteine persulfide intermediate is C105. 245–250 is a binding site for Mo-bis(molybdopterin guanine dinucleotide); sequence FIRGDR.

The protein belongs to the FdhD family.

The protein localises to the cytoplasm. Required for formate dehydrogenase (FDH) activity. Acts as a sulfur carrier protein that transfers sulfur from IscS to the molybdenum cofactor prior to its insertion into FDH. The protein is Sulfur carrier protein FdhD of Listeria innocua serovar 6a (strain ATCC BAA-680 / CLIP 11262).